The sequence spans 268 residues: L-cystine-binding protein TcyA (268 aa).

The signal sequence occupies residues 1–19 (MKKALLALFMVVSIAALAA). A lipid anchor (N-palmitoyl cysteine) is attached at C20. The S-diacylglycerol cysteine moiety is linked to residue C20.

This sequence belongs to the bacterial solute-binding protein 3 family. As to quaternary structure, the complex is composed of two ATP-binding proteins (TcyC), two transmembrane proteins (TcyB) and a solute-binding protein (TcyA).

It localises to the cell membrane. Functionally, part of the ABC transporter complex TcyABC involved in L-cystine import. The sequence is that of L-cystine-binding protein TcyA (tcyA) from Bacillus subtilis (strain 168).